Consider the following 163-residue polypeptide: MTAYDVVIEIPKGSRNKYEVDHETGRVYLDRVLFTAFVYPADYGFFENTLGDDGDPLDVLVLLEYPVFPGVGIKVRPVGVLKMSDEAGGDAKIIAVQHKDPRWQHIQDVNDIPEYTRKEIEHFFARYKDLEPGKFVTIEGWGDAAEAEKIVQAGFANLEAQGH.

Residue E9 participates in Mg(2+) binding. Substrate contacts are provided by K17, R31, and Y43. Mg(2+) is bound by residues D53, D58, D85, and D90. D90 functions as the Proton acceptor in the catalytic mechanism. Y127 contacts substrate.

This sequence belongs to the PPase family. In terms of assembly, homohexamer. Requires Mg(2+) as cofactor.

Its subcellular location is the cytoplasm. It carries out the reaction diphosphate + H2O = 2 phosphate + H(+). Catalyzes the hydrolysis of inorganic pyrophosphate (PPi) forming two phosphate ions. This is Inorganic pyrophosphatase from Leifsonia xyli subsp. xyli (strain CTCB07).